The following is a 140-amino-acid chain: Nucleoside diphosphate kinase (140 aa).

The ATP site is built by Lys11, Phe59, Arg87, Thr93, Arg104, and Asn114. His117 (pros-phosphohistidine intermediate) is an active-site residue.

This sequence belongs to the NDK family. As to quaternary structure, homotetramer. Requires Mg(2+) as cofactor.

It is found in the cytoplasm. It catalyses the reaction a 2'-deoxyribonucleoside 5'-diphosphate + ATP = a 2'-deoxyribonucleoside 5'-triphosphate + ADP. It carries out the reaction a ribonucleoside 5'-diphosphate + ATP = a ribonucleoside 5'-triphosphate + ADP. In terms of biological role, major role in the synthesis of nucleoside triphosphates other than ATP. The ATP gamma phosphate is transferred to the NDP beta phosphate via a ping-pong mechanism, using a phosphorylated active-site intermediate. The protein is Nucleoside diphosphate kinase of Roseobacter denitrificans (strain ATCC 33942 / OCh 114) (Erythrobacter sp. (strain OCh 114)).